Here is a 418-residue protein sequence, read N- to C-terminus: E3 ubiquitin-protein ligase makorin-2 (418 aa).

2 C3H1-type zinc fingers span residues 2 to 29 and 31 to 58; these read NTKH…HDLA and SKPS…HVKP. A disordered region spans residues 76 to 100; sequence ESTPPLLPTQEAAAPVTKSAPQRRE. Residues 164–191 form a C3H1-type 3 zinc finger; sequence DAPQQLCPFAQAGGCHYGESCPYIHGNV. A makorin-type Cys-His region spans residues 192–221; the sequence is CEICGLQVLHPYDQEQRGHHEKLCMANFER. The RING-type zinc-finger motif lies at 237–291; sequence CSICMERVYDKQSPSERRFGILSNCHHTYCLACIRQWRCARQFENPVIKSCPECR. The C3H1-type 4 zinc finger occupies 320 to 349; it reads GMGKKACKYFDQGRGTCPFGGKCLYLHAYP.

It is found in the cytoplasm. The protein resides in the nucleus. It carries out the reaction S-ubiquitinyl-[E2 ubiquitin-conjugating enzyme]-L-cysteine + [acceptor protein]-L-lysine = [E2 ubiquitin-conjugating enzyme]-L-cysteine + N(6)-ubiquitinyl-[acceptor protein]-L-lysine.. It participates in protein modification; protein ubiquitination. Its function is as follows. E3 ubiquitin ligase catalyzing the covalent attachment of ubiquitin moieties onto substrate proteins. Inhibits neurogenesis and axis formation during embryonic development by modulating the phosphatidylinositol 3-kinase (PI3K) pathway. Acts downstream of PI3K and akt1 to up-regulate gsk3b mRNA expression. The protein is E3 ubiquitin-protein ligase makorin-2 (mkrn2) of Xenopus tropicalis (Western clawed frog).